Consider the following 320-residue polypeptide: o-succinylbenzoate synthase (320 aa).

The active-site Proton donor is the Lys-133. Mg(2+)-binding residues include Asp-161, Glu-190, and Asp-213. The active-site Proton acceptor is the Lys-235.

Belongs to the mandelate racemase/muconate lactonizing enzyme family. MenC type 1 subfamily. A divalent metal cation is required as a cofactor.

The catalysed reaction is (1R,6R)-6-hydroxy-2-succinyl-cyclohexa-2,4-diene-1-carboxylate = 2-succinylbenzoate + H2O. It functions in the pathway quinol/quinone metabolism; 1,4-dihydroxy-2-naphthoate biosynthesis; 1,4-dihydroxy-2-naphthoate from chorismate: step 4/7. The protein operates within quinol/quinone metabolism; menaquinone biosynthesis. Its function is as follows. Converts 2-succinyl-6-hydroxy-2,4-cyclohexadiene-1-carboxylate (SHCHC) to 2-succinylbenzoate (OSB). This chain is o-succinylbenzoate synthase, found in Salmonella newport (strain SL254).